The sequence spans 388 residues: Ferrochelatase (388 aa).

Residues His196 and Glu277 each contribute to the Fe cation site.

Belongs to the ferrochelatase family.

It localises to the cytoplasm. The enzyme catalyses heme b + 2 H(+) = protoporphyrin IX + Fe(2+). It functions in the pathway porphyrin-containing compound metabolism; protoheme biosynthesis; protoheme from protoporphyrin-IX: step 1/1. In terms of biological role, catalyzes the ferrous insertion into protoporphyrin IX. The chain is Ferrochelatase from Nostoc sp. (strain PCC 7120 / SAG 25.82 / UTEX 2576).